The sequence spans 458 residues: Exodeoxyribonuclease 7 large subunit (458 aa).

It belongs to the XseA family. As to quaternary structure, heterooligomer composed of large and small subunits.

The protein localises to the cytoplasm. It carries out the reaction Exonucleolytic cleavage in either 5'- to 3'- or 3'- to 5'-direction to yield nucleoside 5'-phosphates.. Bidirectionally degrades single-stranded DNA into large acid-insoluble oligonucleotides, which are then degraded further into small acid-soluble oligonucleotides. In Escherichia coli O6:H1 (strain CFT073 / ATCC 700928 / UPEC), this protein is Exodeoxyribonuclease 7 large subunit.